Here is a 427-residue protein sequence, read N- to C-terminus: Cyclin-L1-1 (427 aa).

The disordered stretch occupies residues His-258–Gln-427. Residues Asp-263 to Ala-276 are compositionally biased toward polar residues. 4 stretches are compositionally biased toward basic and acidic residues: residues Gln-289–Lys-311, Lys-328–Arg-382, Asp-390–Lys-400, and Arg-407–Lys-421.

This sequence belongs to the cyclin family. Cyclin L subfamily.

The chain is Cyclin-L1-1 (CYCL1-1) from Oryza sativa subsp. japonica (Rice).